A 385-amino-acid chain; its full sequence is Multidrug resistance protein MdtE (385 aa).

Residues 1–20 (MNRRRKLLIPLLFCGAMLTA) form the signal peptide. A lipid anchor (N-palmitoyl cysteine) is attached at C21. A lipid anchor (S-diacylglycerol cysteine) is attached at C21.

It belongs to the membrane fusion protein (MFP) (TC 8.A.1) family. As to quaternary structure, homotrimer. Part of the tripartite efflux system MdtEF-TolC, which is composed of an inner membrane transporter, MdtF, a membrane fusion protein, MdtE, and an outer membrane component, TolC. The complex forms a large protein conduit and can translocate molecules across both the inner and outer membranes.

It is found in the cell inner membrane. Functionally, part of the tripartite efflux system MdtEF-TolC, which confers resistance to various compounds. The chain is Multidrug resistance protein MdtE (mdtE) from Escherichia coli O157:H7.